The sequence spans 61 residues: Insect toxin BsIT1 (61 aa).

Positions 1–61 (DGYILMRNGC…KHLNYHKKTC (61 aa)) constitute an LCN-type CS-alpha/beta domain. 4 cysteine pairs are disulfide-bonded: cysteine 10-cysteine 61, cysteine 14-cysteine 35, cysteine 21-cysteine 42, and cysteine 25-cysteine 44.

Belongs to the long (4 C-C) scorpion toxin superfamily. Sodium channel inhibitor family. Beta subfamily. In terms of tissue distribution, expressed by the venom gland.

The protein localises to the secreted. Depressant insect beta-toxins cause a transient contraction paralysis followed by a slow flaccid paralysis. They bind voltage-independently at site-4 of sodium channels (Nav) and shift the voltage of activation toward more negative potentials thereby affecting sodium channel activation and promoting spontaneous and repetitive firing. This toxin is active only on insects and causes a transient contraction paralysis followed by a slow flaccid paralysis. In Hottentotta tamulus sindicus (Scorpion), this protein is Insect toxin BsIT1.